The primary structure comprises 190 residues: Elongation factor P-like protein (190 aa).

This sequence belongs to the elongation factor P family.

The polypeptide is Elongation factor P-like protein (Serratia proteamaculans (strain 568)).